We begin with the raw amino-acid sequence, 90 residues long: Sec-independent protein translocase protein TatA (90 aa).

Residues 1–21 (MGGASIWHWIVVGVIVMLLFG) form a helical membrane-spanning segment. The tract at residues 42 to 90 (GMADEDQPQAPVANQSPPPVSATEPVRTLPPHQGEPAPAANASVDRKVG) is disordered.

Belongs to the TatA/E family. The Tat system comprises two distinct complexes: a TatABC complex, containing multiple copies of TatA, TatB and TatC subunits, and a separate TatA complex, containing only TatA subunits. Substrates initially bind to the TatABC complex, which probably triggers association of the separate TatA complex to form the active translocon.

Its subcellular location is the cell inner membrane. Part of the twin-arginine translocation (Tat) system that transports large folded proteins containing a characteristic twin-arginine motif in their signal peptide across membranes. TatA could form the protein-conducting channel of the Tat system. This chain is Sec-independent protein translocase protein TatA, found in Methylobacterium nodulans (strain LMG 21967 / CNCM I-2342 / ORS 2060).